The primary structure comprises 267 residues: 3-isopropylmalate dehydratase large subunit (267 aa).

The [4Fe-4S] cluster site is built by Cys146, Cys206, and Cys209.

Belongs to the aconitase/IPM isomerase family. LeuC type 1 subfamily. As to quaternary structure, heterodimer of LeuC and LeuD. It depends on [4Fe-4S] cluster as a cofactor.

The catalysed reaction is (2R,3S)-3-isopropylmalate = (2S)-2-isopropylmalate. Its pathway is amino-acid biosynthesis; L-leucine biosynthesis; L-leucine from 3-methyl-2-oxobutanoate: step 2/4. Its function is as follows. Catalyzes the isomerization between 2-isopropylmalate and 3-isopropylmalate, via the formation of 2-isopropylmaleate. The protein is 3-isopropylmalate dehydratase large subunit (leuC) of Cupriavidus necator (Alcaligenes eutrophus).